Reading from the N-terminus, the 295-residue chain is Protoheme IX farnesyltransferase (295 aa).

The next 9 helical transmembrane spans lie at 9-29 (ITKPGIIFGNVLSVAGGFFLA), 36-56 (FGVFLAAVIGTSLVVASGCVF), 80-100 (LVSLKLALLYATLLGIAGVAL), 108-128 (LAALFAVIGFVIYVGFYSLYL), 135-155 (GTLVGSLSGAMPPVIGYCAVS), 163-183 (LTLLVMFSLWQMPHSYAIAIF), 209-229 (ILLYILAFLVATLMLTVGGYA), 230-250 (GLNYLAVAAGMGMYWLYMAWK), and 265-285 (FVFSIFTITALSVMMSVDFQV).

The protein belongs to the UbiA prenyltransferase family. Protoheme IX farnesyltransferase subfamily.

It localises to the cell inner membrane. It carries out the reaction heme b + (2E,6E)-farnesyl diphosphate + H2O = Fe(II)-heme o + diphosphate. It participates in porphyrin-containing compound metabolism; heme O biosynthesis; heme O from protoheme: step 1/1. Its function is as follows. Converts heme B (protoheme IX) to heme O by substitution of the vinyl group on carbon 2 of heme B porphyrin ring with a hydroxyethyl farnesyl side group. In Pseudomonas syringae pv. tomato (strain ATCC BAA-871 / DC3000), this protein is Protoheme IX farnesyltransferase.